The sequence spans 315 residues: Olfactory receptor 3A10 (315 aa).

The Extracellular segment spans residues 1–28; the sequence is MEPGAWGNRTAVTDFILLGLTGNVRLQP. The N-linked (GlcNAc...) asparagine glycan is linked to Asn8. The helical transmembrane segment at 29 to 49 threads the bilayer; sequence ILFVVFFFAYIVTVGGNLSIL. Topologically, residues 50 to 68 are cytoplasmic; sequence AAIFVEPKLHTPMYYFLGN. A helical membrane pass occupies residues 69–89; it reads LSLLDIGCISVTVPPMLVCLL. Over 90-97 the chain is Extracellular; sequence AHECRVPY. A helical transmembrane segment spans residues 98–118; the sequence is AACISQLFFFHLLAGVDCHLL. Cysteines 100 and 192 form a disulfide. Over 119–145 the chain is Cytoplasmic; it reads TAMAYDRYLAICQPLTYSTRMSREVQG. The helical transmembrane segment at 146 to 166 threads the bilayer; that stretch reads TLVGICCTVSFINALTHTVAV. Topologically, residues 167–200 are extracellular; that stretch reads SVLDFCGPNVVNHFYCDLPPLFQLSCSSIYLNGQ. Residues 201–221 traverse the membrane as a helical segment; sequence LLFVGATFMGVVPMILISVSY. Residues 222–239 lie on the Cytoplasmic side of the membrane; the sequence is AHVAAAVLRIRSTEGRKK. The helical transmembrane segment at 240 to 260 threads the bilayer; it reads AFSTCGSHLTVVCIFYGTGFF. Residues 261–274 lie on the Extracellular side of the membrane; it reads SYMRLGSVSASDKD. A helical membrane pass occupies residues 275-295; sequence KGIGILNTILSPMLNPLIYSL. At 296–315 the chain is on the cytoplasmic side; it reads RNPDVQGALKRVLTGKRYPV.

The protein belongs to the G-protein coupled receptor 1 family.

Its subcellular location is the cell membrane. In terms of biological role, odorant receptor. This chain is Olfactory receptor 3A10, found in Mus musculus (Mouse).